A 266-amino-acid polypeptide reads, in one-letter code: Putative hydro-lyase Jann_2570 (266 aa).

Belongs to the D-glutamate cyclase family.

This is Putative hydro-lyase Jann_2570 from Jannaschia sp. (strain CCS1).